We begin with the raw amino-acid sequence, 373 residues long: Spore coat polysaccharide biosynthesis protein SpsE (373 aa).

Residues 305–367 form the AFP-like domain; that stretch reads GIFTTAPIQK…GIVWDDILLK (63 aa).

Its pathway is spore coat biogenesis; spore coat polysaccharide biosynthesis. The polypeptide is Spore coat polysaccharide biosynthesis protein SpsE (spsE) (Bacillus subtilis (strain 168)).